A 245-amino-acid polypeptide reads, in one-letter code: 1-(5-phosphoribosyl)-5-[(5-phosphoribosylamino)methylideneamino] imidazole-4-carboxamide isomerase (245 aa).

Asp-8 functions as the Proton acceptor in the catalytic mechanism. Asp-131 functions as the Proton donor in the catalytic mechanism.

It belongs to the HisA/HisF family.

It localises to the cytoplasm. It catalyses the reaction 1-(5-phospho-beta-D-ribosyl)-5-[(5-phospho-beta-D-ribosylamino)methylideneamino]imidazole-4-carboxamide = 5-[(5-phospho-1-deoxy-D-ribulos-1-ylimino)methylamino]-1-(5-phospho-beta-D-ribosyl)imidazole-4-carboxamide. It functions in the pathway amino-acid biosynthesis; L-histidine biosynthesis; L-histidine from 5-phospho-alpha-D-ribose 1-diphosphate: step 4/9. The chain is 1-(5-phosphoribosyl)-5-[(5-phosphoribosylamino)methylideneamino] imidazole-4-carboxamide isomerase from Neisseria meningitidis serogroup C / serotype 2a (strain ATCC 700532 / DSM 15464 / FAM18).